The sequence spans 177 residues: Large ribosomal subunit protein uL6 (177 aa).

Belongs to the universal ribosomal protein uL6 family. Part of the 50S ribosomal subunit.

This protein binds to the 23S rRNA, and is important in its secondary structure. It is located near the subunit interface in the base of the L7/L12 stalk, and near the tRNA binding site of the peptidyltransferase center. The chain is Large ribosomal subunit protein uL6 from Haemophilus influenzae (strain 86-028NP).